We begin with the raw amino-acid sequence, 149 residues long: Interleukin-2 (149 aa).

Residues 1 to 20 form the signal peptide; the sequence is MYRMQLLSCIALTLAVLANS. T23 carries O-linked (GalNAc...) threonine glycosylation. Cysteines 78 and 121 form a disulfide. N106 carries N-linked (GlcNAc...) asparagine glycosylation.

This sequence belongs to the IL-2 family.

It localises to the secreted. Functionally, cytokine produced by activated CD4-positive helper T-cells and to a lesser extend activated CD8-positive T-cells and natural killer (NK) cells that plays pivotal roles in the immune response and tolerance. Binds to a receptor complex composed of either the high-affinity trimeric IL-2R (IL2RA/CD25, IL2RB/CD122 and IL2RG/CD132) or the low-affinity dimeric IL-2R (IL2RB and IL2RG). Interaction with the receptor leads to oligomerization and conformation changes in the IL-2R subunits resulting in downstream signaling starting with phosphorylation of JAK1 and JAK3. In turn, JAK1 and JAK3 phosphorylate the receptor to form a docking site leading to the phosphorylation of several substrates including STAT5. This process leads to activation of several pathways including STAT, phosphoinositide-3-kinase/PI3K and mitogen-activated protein kinase/MAPK pathways. Functions as a T-cell growth factor and can increase NK-cell cytolytic activity as well. Promotes strong proliferation of activated B-cells and subsequently immunoglobulin production. Plays a pivotal role in regulating the adaptive immune system by controlling the survival and proliferation of regulatory T-cells, which are required for the maintenance of immune tolerance. Moreover, participates in the differentiation and homeostasis of effector T-cell subsets, including Th1, Th2, Th17 as well as memory CD8-positive T-cells. The sequence is that of Interleukin-2 (IL2) from Equus caballus (Horse).